The primary structure comprises 201 residues: Inosine triphosphate pyrophosphatase (201 aa).

16–21 is a binding site for ITP; that stretch reads TGNAKK. Glu44 is a Mg(2+) binding site. Residues Lys56, 72–73, Lys89, 148–151, Lys171, and 176–177 each bind ITP; these read DT, FGWD, and HR.

This sequence belongs to the HAM1 NTPase family. In terms of assembly, homodimer. Requires Mg(2+) as cofactor. It depends on Mn(2+) as a cofactor.

The protein resides in the cytoplasm. The enzyme catalyses ITP + H2O = IMP + diphosphate + H(+). It catalyses the reaction dITP + H2O = dIMP + diphosphate + H(+). It carries out the reaction XTP + H2O = XMP + diphosphate + H(+). Functionally, pyrophosphatase that hydrolyzes non-canonical purine nucleotides such as inosine triphosphate (ITP), deoxyinosine triphosphate (dITP) or xanthosine 5'-triphosphate (XTP) to their respective monophosphate derivatives. The enzyme does not distinguish between the deoxy- and ribose forms. Probably excludes non-canonical purines from RNA and DNA precursor pools, thus preventing their incorporation into RNA and DNA and avoiding chromosomal lesions. The polypeptide is Inosine triphosphate pyrophosphatase (Zea mays (Maize)).